Reading from the N-terminus, the 478-residue chain is Alpha-1,3-mannosyl-glycoprotein 4-beta-N-acetylglucosaminyltransferase C (478 aa).

The Cytoplasmic portion of the chain corresponds to 1–23 (MFKFHQVKHIFEILDKMRCLRKR). The helical; Signal-anchor for type II membrane protein transmembrane segment at 24–44 (FTVSFLGVLVIFLLFMNLYIE) threads the bilayer. Over 45 to 478 (DSYVLEGDKQ…IIRSISIWTS (434 aa)) the chain is Lumenal. N-linked (GlcNAc...) asparagine glycans are attached at residues Asn-84, Asn-215, and Asn-348.

The protein belongs to the glycosyltransferase 54 family. A divalent metal cation is required as a cofactor.

It is found in the golgi apparatus membrane. It catalyses the reaction N(4)-{beta-D-GlcNAc-(1-&gt;2)-alpha-D-Man-(1-&gt;3)-[beta-D-GlcNAc-(1-&gt;2)-alpha-D-Man-(1-&gt;6)]-beta-D-Man-(1-&gt;4)-beta-D-GlcNAc-(1-&gt;4)-beta-D-GlcNAc}-L-asparaginyl-[protein] + UDP-N-acetyl-alpha-D-glucosamine = N(4)-{beta-D-GlcNAc-(1-&gt;2)-[beta-D-GlcNAc-(1-&gt;4)]-alpha-D-Man-(1-&gt;3)-[beta-D-GlcNAc-(1-&gt;2)-alpha-D-Man-(1-&gt;6)]-beta-D-Man-(1-&gt;4)-beta-D-GlcNAc-(1-&gt;4)-beta-D-GlcNAc}-L-asparaginyl-[protein] + UDP + H(+). Its pathway is protein modification; protein glycosylation. Glycosyltransferase that participates in the transfer of N-acetylglucosamine (GlcNAc) to the core mannose residues of N-linked glycans. Catalyzes the formation of the GlcNAcbeta1-4 branch on the GlcNAcbeta1-2Manalpha1-3 arm of the core structure of N-linked glycans. Essential for the production of tri- and tetra-antennary N-linked sugar chains. Does not catalyze the transfer of GlcNAc to the Manalpha1-6 arm to form GlcNAcBeta1-4Manalpha1-6 linkage ('GnT-VI' activity). This is Alpha-1,3-mannosyl-glycoprotein 4-beta-N-acetylglucosaminyltransferase C (MGAT4C) from Sus scrofa (Pig).